The primary structure comprises 363 residues: DNA replication and repair protein RecF (363 aa).

30–37 (GNNAQGKT) serves as a coordination point for ATP.

This sequence belongs to the RecF family.

It localises to the cytoplasm. In terms of biological role, the RecF protein is involved in DNA metabolism; it is required for DNA replication and normal SOS inducibility. RecF binds preferentially to single-stranded, linear DNA. It also seems to bind ATP. In Clostridium acetobutylicum (strain ATCC 824 / DSM 792 / JCM 1419 / IAM 19013 / LMG 5710 / NBRC 13948 / NRRL B-527 / VKM B-1787 / 2291 / W), this protein is DNA replication and repair protein RecF.